We begin with the raw amino-acid sequence, 165 residues long: Lipoprotein signal peptidase (165 aa).

A run of 2 helical transmembrane segments spans residues 64–84 and 88–108; these read LGRW…GAWM and GSRL…GNAV. Residues Asp-118 and Asp-136 contribute to the active site. The helical transmembrane segment at 128 to 148 threads the bilayer; the sequence is SWYVFNVADAGIVAGVAGLLV.

This sequence belongs to the peptidase A8 family.

It is found in the cell inner membrane. It carries out the reaction Release of signal peptides from bacterial membrane prolipoproteins. Hydrolyzes -Xaa-Yaa-Zaa-|-(S,diacylglyceryl)Cys-, in which Xaa is hydrophobic (preferably Leu), and Yaa (Ala or Ser) and Zaa (Gly or Ala) have small, neutral side chains.. Its pathway is protein modification; lipoprotein biosynthesis (signal peptide cleavage). Functionally, this protein specifically catalyzes the removal of signal peptides from prolipoproteins. This chain is Lipoprotein signal peptidase, found in Methylobacterium sp. (strain 4-46).